The primary structure comprises 336 residues: Ribosomal RNA large subunit methyltransferase F (336 aa).

The segment at 1–24 is disordered; the sequence is MPRPTSPHPDAERKSASPLHPRNR.

Belongs to the methyltransferase superfamily. METTL16/RlmF family.

It localises to the cytoplasm. The enzyme catalyses adenosine(1618) in 23S rRNA + S-adenosyl-L-methionine = N(6)-methyladenosine(1618) in 23S rRNA + S-adenosyl-L-homocysteine + H(+). In terms of biological role, specifically methylates the adenine in position 1618 of 23S rRNA. This Pseudomonas aeruginosa (strain LESB58) protein is Ribosomal RNA large subunit methyltransferase F.